Consider the following 944-residue polypeptide: Calcium-transporting ATPase type 2C member 2 (944 aa).

Over 1–104 (MGRRLKFLQK…DNAEPVWKKY (104 aa)) the chain is Cytoplasmic. An interaction with ORAI1 region spans residues 69–93 (VDLDSGLSEFAVAQRRLVHGWNEFV). A helical transmembrane segment spans residues 105-125 (LDQFRNPLILLLLGSSVVSVL). At 126 to 127 (TK) the chain is on the extracellular side. A helical transmembrane segment spans residues 128-148 (EYEDAVSIALAVLIVVTVGFI). The Cytoplasmic segment spans residues 149–229 (QEYRSEKSLE…EVEPCGKTDS (81 aa)). A helical transmembrane segment spans residues 230–250 (PLADGGDLSTLSNVVFMGTLV). At 251–291 (QCGKGQGVVIGTGEQSQFGEVFKMMRAEETPKTPLQKSMDK) the chain is on the extracellular side. Thr262 bears the Phosphothreonine mark. Residue Ser266 is modified to Phosphoserine. A helical membrane pass occupies residues 292–312 (LGKQLTIFSFGIIGLLMLVGW). The Cytoplasmic segment spans residues 313–329 (VQGKPFLSMFTVGVSLA). Ca(2+) is bound by residues Val330, Ala331, Ile333, and Glu335. The chain crosses the membrane as a helical span at residues 330 to 350 (VAAIPEGLPIVVMVTLVLGVL). Over 351-748 (RMAKKRVIVK…IAALSLITLS (398 aa)) the chain is Extracellular. Asp377 acts as the 4-aspartylphosphate intermediate in catalysis. Mg(2+)-binding residues include Asp672 and Asp676. Residues 749–769 (TVCNLPSPLNAMQILWVNIIM) form a helical membrane-spanning segment. Positions 766 and 770 each coordinate Ca(2+). The Cytoplasmic segment spans residues 770 to 802 (DGPPAQSLGVEPVDRDALRRPPRSVGDTILNRA). Residues 803 to 823 (LILRVLMSAAVIIGGTLFIFW) traverse the membrane as a helical segment. Topologically, residues 824-835 (REIPANGTSTPR) are extracellular. The chain crosses the membrane as a helical span at residues 836–853 (TTTMAFTCFVFFDLFNAL). The Cytoplasmic portion of the chain corresponds to 854–872 (SCRSQTKLIFEIGFFRNRM). A helical membrane pass occupies residues 873–893 (FLYSVLGSLLGQLAVIYAPPL). Topologically, residues 894-903 (QKVFQTENLS) are extracellular. A helical membrane pass occupies residues 904 to 924 (ALDLLLLTGLASSVFILSELL). Residues 925 to 944 (KLWEKFLSRARPTQMLPEAV) are Cytoplasmic-facing.

Belongs to the cation transport ATPase (P-type) (TC 3.A.3) family. Type IIA subfamily. Interacts (via N-terminus) with ORAI1 (via N- and C-termini); this interaction regulates Ca(2+) influx at the plasma membrane. As to expression, expressed in hippocampal neurons (at protein level). Expressed in lactating mammary epithelium (at protein level).

Its subcellular location is the golgi apparatus. The protein resides in the trans-Golgi network membrane. It is found in the cell membrane. The protein localises to the basolateral cell membrane. It carries out the reaction Ca(2+)(in) + ATP + H2O = Ca(2+)(out) + ADP + phosphate + H(+). It catalyses the reaction Mn(2+)(in) + ATP + H2O = Mn(2+)(out) + ADP + phosphate + H(+). ATP-driven pump that supplies the Golgi apparatus with Ca(2+) and Mn(2+) ions, both essential cofactors for processing and trafficking of newly synthesized proteins in the secretory pathway. Within a catalytic cycle, acquires Ca(2+) or Mn(2+) ions on the cytoplasmic side of the membrane and delivers them to the lumenal side. The transfer of ions across the membrane is coupled to ATP hydrolysis and is associated with a transient phosphorylation that shifts the pump conformation from inward-facing to outward-facing state. Induces Ca(2+) influx independently of its ATP-driven pump function. At the basolateral membrane of mammary epithelial cells, interacts with Ca(2+) channel ORAI1 and mediates Ca(2+) entry independently of the Ca(2+) content of endoplasmic reticulum or Golgi stores. May facilitate transepithelial transport of large quantities of Ca(2+) for milk secretion via activation of Ca(2+) influx channels at the plasma membrane and active Ca(2+) transport at the Golgi apparatus. The sequence is that of Calcium-transporting ATPase type 2C member 2 from Mus musculus (Mouse).